The primary structure comprises 485 residues: NADH-quinone oxidoreductase subunit N (485 aa).

The next 14 helical transmembrane spans lie at 8 to 28 (LIAL…MLSI), 35 to 55 (FLNA…LWFV), 75 to 95 (LYTG…YPWL), 105 to 125 (FYLL…ANHL), 127 to 147 (ALFL…GYAF), 159 to 179 (YTIL…LVYA), 203 to 223 (LLAG…LVPF), 235 to 255 (PAPV…GVVM), 271 to 291 (VVLG…ALSQ), 297 to 317 (LLGY…IALQ), 326 to 346 (VGVY…VVSL), 374 to 394 (AVMT…GFIG), 408 to 430 (WWLV…RVAV), and 455 to 475 (IVVL…QPLI).

It belongs to the complex I subunit 2 family. In terms of assembly, NDH-1 is composed of 13 different subunits. Subunits NuoA, H, J, K, L, M, N constitute the membrane sector of the complex.

The protein resides in the cell inner membrane. The enzyme catalyses a quinone + NADH + 5 H(+)(in) = a quinol + NAD(+) + 4 H(+)(out). Functionally, NDH-1 shuttles electrons from NADH, via FMN and iron-sulfur (Fe-S) centers, to quinones in the respiratory chain. The immediate electron acceptor for the enzyme in this species is believed to be ubiquinone. Couples the redox reaction to proton translocation (for every two electrons transferred, four hydrogen ions are translocated across the cytoplasmic membrane), and thus conserves the redox energy in a proton gradient. The protein is NADH-quinone oxidoreductase subunit N of Klebsiella pneumoniae (strain 342).